The sequence spans 391 residues: Multidrug resistance protein MdtL (391 aa).

A run of 12 helical transmembrane segments spans residues 4–24 (FLIC…MYLV), 42–62 (IAFS…GKVA), 69–89 (PVAI…SLAE), 93–113 (LFLA…VVAF), 131–151 (LLNG…HLIM), 158–178 (SLFW…LFIL), 203–222 (FFLS…LTFV), 245–265 (ALTA…LGIF), 269–289 (TLMI…AVSP), 293–313 (VSLF…GVAM), 331–351 (LGIA…VVGI), and 356–376 (MLIG…MFVA).

This sequence belongs to the major facilitator superfamily. DHA1 family. MdtL (TC 2.A.1.2.22) subfamily.

The protein resides in the cell inner membrane. In terms of biological role, confers resistance to chloramphenicol. This Escherichia coli O9:H4 (strain HS) protein is Multidrug resistance protein MdtL.